The primary structure comprises 492 residues: FAD-containing monooxygenase EthA (492 aa).

Residues Ser15, Glu36, 44 to 47, Asp56, and Val104 each bind FAD; that span reads TWDL. 54-56 provides a ligand contact to NADP(+); it reads RSD. NADP(+)-binding positions include 183 to 189 and 207 to 208; these read SGATAVT and RS.

Belongs to the FAD-binding monooxygenase family. FAD serves as cofactor.

Its subcellular location is the cell membrane. The catalysed reaction is ethionamide + NADPH + O2 + H(+) = ethionamide S-oxide + NADP(+) + H2O. In terms of biological role, monooxygenase able to convert a wide range of ketones to the corresponding esters or lactones via a Baeyer-Villiger oxidation reaction. Can act on long-chain aliphatic ketones (2-hexanone to 2-dodecanone) and on aromatic ketones (phenylacetone and benzylacetone). Is also able to catalyze enantioselective sulfoxidation of methyl-p-tolylsulfide. In vivo, likely functions as a BVMO, but the exact nature of the physiological substrate(s) remains to be established. Functionally, is responsible for the activation of several thiocarbamide-containing pro-drugs, such as ethionamide (ETH), isoxyl (ISO) and thiacetazone (TAC), into reactive species. In Mycolicibacterium smegmatis (strain ATCC 700084 / mc(2)155) (Mycobacterium smegmatis), this protein is FAD-containing monooxygenase EthA (ethA).